The primary structure comprises 268 residues: 4-hydroxy-tetrahydrodipicolinate reductase (268 aa).

NAD(+) contacts are provided by residues 9 to 14 (GAAGRM), 99 to 101 (GTT), and 123 to 126 (ASNF). H156 functions as the Proton donor/acceptor in the catalytic mechanism. Residue H157 participates in (S)-2,3,4,5-tetrahydrodipicolinate binding. K160 serves as the catalytic Proton donor. A (S)-2,3,4,5-tetrahydrodipicolinate-binding site is contributed by 166–167 (GT).

This sequence belongs to the DapB family.

Its subcellular location is the cytoplasm. The catalysed reaction is (S)-2,3,4,5-tetrahydrodipicolinate + NAD(+) + H2O = (2S,4S)-4-hydroxy-2,3,4,5-tetrahydrodipicolinate + NADH + H(+). It carries out the reaction (S)-2,3,4,5-tetrahydrodipicolinate + NADP(+) + H2O = (2S,4S)-4-hydroxy-2,3,4,5-tetrahydrodipicolinate + NADPH + H(+). Its pathway is amino-acid biosynthesis; L-lysine biosynthesis via DAP pathway; (S)-tetrahydrodipicolinate from L-aspartate: step 4/4. Catalyzes the conversion of 4-hydroxy-tetrahydrodipicolinate (HTPA) to tetrahydrodipicolinate. The chain is 4-hydroxy-tetrahydrodipicolinate reductase from Saccharophagus degradans (strain 2-40 / ATCC 43961 / DSM 17024).